A 227-amino-acid chain; its full sequence is Small ribosomal subunit protein uS3 (227 aa).

In terms of domain architecture, KH type-2 spans 38-106 (LRKYLREKLA…EVHLNIVEIR (69 aa)).

This sequence belongs to the universal ribosomal protein uS3 family. Part of the 30S ribosomal subunit. Forms a tight complex with proteins S10 and S14.

In terms of biological role, binds the lower part of the 30S subunit head. Binds mRNA in the 70S ribosome, positioning it for translation. In Paramagnetospirillum magneticum (strain ATCC 700264 / AMB-1) (Magnetospirillum magneticum), this protein is Small ribosomal subunit protein uS3.